The following is a 185-amino-acid chain: Acireductone dioxygenase (185 aa).

His-97, His-99, Glu-103, and His-141 together coordinate Fe(2+). Ni(2+) is bound by residues His-97, His-99, Glu-103, and His-141.

This sequence belongs to the acireductone dioxygenase (ARD) family. As to quaternary structure, monomer. The cofactor is Fe(2+). Ni(2+) is required as a cofactor.

It catalyses the reaction 1,2-dihydroxy-5-(methylsulfanyl)pent-1-en-3-one + O2 = 3-(methylsulfanyl)propanoate + CO + formate + 2 H(+). It carries out the reaction 1,2-dihydroxy-5-(methylsulfanyl)pent-1-en-3-one + O2 = 4-methylsulfanyl-2-oxobutanoate + formate + 2 H(+). It functions in the pathway amino-acid biosynthesis; L-methionine biosynthesis via salvage pathway; L-methionine from S-methyl-5-thio-alpha-D-ribose 1-phosphate: step 5/6. Functionally, catalyzes 2 different reactions between oxygen and the acireductone 1,2-dihydroxy-3-keto-5-methylthiopentene (DHK-MTPene) depending upon the metal bound in the active site. Fe-containing acireductone dioxygenase (Fe-ARD) produces formate and 2-keto-4-methylthiobutyrate (KMTB), the alpha-ketoacid precursor of methionine in the methionine recycle pathway. Ni-containing acireductone dioxygenase (Ni-ARD) produces methylthiopropionate, carbon monoxide and formate, and does not lie on the methionine recycle pathway. The sequence is that of Acireductone dioxygenase from Stenotrophomonas maltophilia (strain K279a).